A 311-amino-acid chain; its full sequence is Deoxyhypusine hydroxylase (311 aa).

HEAT-like PBS-type repeat units lie at residues 69 to 95 (LKHE…VLEN), 102 to 128 (VRHE…YFKN), 196 to 222 (ERYR…GLDD), 228 to 254 (FKHE…TLKD), and 261 to 287 (VRHE…FLND). 4 residues coordinate Fe cation: H71, E72, H104, and E105. 4 residues coordinate Fe cation: H230, E231, H263, and E264.

This sequence belongs to the deoxyhypusine hydroxylase family. Fe(2+) is required as a cofactor.

Its subcellular location is the cytoplasm. It is found in the nucleus. The enzyme catalyses [eIF5A protein]-deoxyhypusine + AH2 + O2 = [eIF5A protein]-hypusine + A + H2O. The protein operates within protein modification; eIF5A hypusination. Functionally, catalyzes the hydroxylation of the N(6)-(4-aminobutyl)-L-lysine intermediate to form hypusine, an essential post-translational modification only found in mature eIF-5A factor. The polypeptide is Deoxyhypusine hydroxylase (Debaryomyces hansenii (strain ATCC 36239 / CBS 767 / BCRC 21394 / JCM 1990 / NBRC 0083 / IGC 2968) (Yeast)).